The chain runs to 342 residues: uncharacterized protein (342 aa).

The MurNAc-LAA domain maps to 3 to 173; that stretch reads IAIRGGHNFL…LIGYLIAKGI (171 aa).

This sequence to C.perfringens CPE1502.

This is an uncharacterized protein from Clostridium perfringens.